The chain runs to 297 residues: 33 kDa chaperonin (297 aa).

Disulfide bonds link Cys-232–Cys-234 and Cys-266–Cys-269.

Belongs to the HSP33 family. Post-translationally, under oxidizing conditions two disulfide bonds are formed involving the reactive cysteines. Under reducing conditions zinc is bound to the reactive cysteines and the protein is inactive.

The protein resides in the cytoplasm. Redox regulated molecular chaperone. Protects both thermally unfolding and oxidatively damaged proteins from irreversible aggregation. Plays an important role in the bacterial defense system toward oxidative stress. This chain is 33 kDa chaperonin, found in Azotobacter vinelandii (strain DJ / ATCC BAA-1303).